The chain runs to 86 residues: MDAFDVIKTPIVSEKTMKLIEEENRLVFYVERKATKEDIKEAIKQLFNAEVAEVNTNITPKGQKKAYIKLKDEYNAGEVAASLGIY.

It belongs to the universal ribosomal protein uL23 family. Part of the 50S ribosomal subunit. Contacts protein L29.

Its function is as follows. Binds to 23S rRNA. One of the proteins that surrounds the polypeptide exit tunnel on the outside of the ribosome. The protein is Large ribosomal subunit protein uL23 of Methanococcus vannielii (strain ATCC 35089 / DSM 1224 / JCM 13029 / OCM 148 / SB).